The following is a 302-amino-acid chain: uncharacterized protein (302 aa).

The next 10 membrane-spanning stretches (helical) occupy residues 13 to 32 (GILLAISAYTMWGIAPIYFK), 42 to 64 (ILSHRVVWSFVLLAVLIHLGRRW), 77 to 96 (FWLLLVTALLVGGNWLIFIW), 106 to 125 (ASLGYYINPLLNVLLGMLFL), 132 to 150 (LQWFAVALAAIGVGIQLVV), 154 to 171 (VPIVAIALATSFGFYGLL), 183 to 202 (LFLETLFMLPAAAIYLIWLA), 217 to 239 (NLLLVCAGVVTTLPLLCFTGAAA), 246 to 265 (LGFFQYIGPSLMFLLAVLVY), and 275 to 297 (ITFAFIWSALVIFSVDGLKAGHA). The EamA domain occupies 22 to 149 (TMWGIAPIYF…AAIGVGIQLV (128 aa)).

Belongs to the EamA transporter family.

The protein resides in the cell membrane. This is an uncharacterized protein from Vibrio cholerae serotype O1 (strain ATCC 39315 / El Tor Inaba N16961).